Here is a 185-residue protein sequence, read N- to C-terminus: ADP-ribosylation factor (185 aa).

Gly2 carries N-myristoyl glycine lipidation. GTP-binding positions include 27–34 (GLDAAGKT), 70–74 (DVGGQ), and 129–132 (NKQD).

This sequence belongs to the small GTPase superfamily. Arf family.

The protein localises to the golgi apparatus. GTP-binding protein involved in protein trafficking; may modulate vesicle budding and uncoating within the Golgi apparatus. The chain is ADP-ribosylation factor from Neurospora crassa (strain ATCC 24698 / 74-OR23-1A / CBS 708.71 / DSM 1257 / FGSC 987).